The sequence spans 93 residues: Alpha-defensin 6/12 (93 aa).

An N-terminal signal peptide occupies residues 1–19; sequence MKTLILLSALVLLAFQVQA. Positions 20–60 are excised as a propeptide; sequence DPIQNTDEETKTEEQPGEEDQAVSVSFGDPEGTSLQEESLR. The segment at 23-54 is disordered; it reads QNTDEETKTEEQPGEEDQAVSVSFGDPEGTSL. 3 cysteine pairs are disulfide-bonded: cysteine 64/cysteine 92, cysteine 66/cysteine 81, and cysteine 71/cysteine 91.

The protein belongs to the alpha-defensin family. Paneth cells of the small bowel.

Its subcellular location is the secreted. Functionally, has broad-spectrum antimicrobial properties. Has antibacterial activity against the Gram-positive bacterium L.monocytogenes EGD and the Gram-negative bacteria E.coli ML-35p and avirulent S.typhimurium 7953, but not against the mouse-virulent S.typhimurium 14028S. Probably contributes to the antimicrobial barrier function of the small bowel mucosa. The sequence is that of Alpha-defensin 6/12 (Defa6) from Mus musculus (Mouse).